The following is a 664-amino-acid chain: Ent-copalyl diphosphate synthase 5 (664 aa).

K101 is a substrate binding site. Mg(2+) is bound by residues D233 and D235. Positions 233–236 (DIDD) match the DXDD motif motif. K320 lines the substrate pocket.

This sequence belongs to the terpene synthase family. Tpsc subfamily. Requires Mg(2+) as cofactor. As to expression, ubiquitous expression in roots, stems, leaves and flowers.

It localises to the plastid. It is found in the chloroplast. The enzyme catalyses (2E,6E,10E)-geranylgeranyl diphosphate = ent-copalyl diphosphate. Its pathway is secondary metabolite biosynthesis; terpenoid biosynthesis. Its function is as follows. Involved in the biosynthesis of ent-kaurene diterpenoids natural products such as oridonin, miltiradiene, eriocalyxin B and nezukol, known to exhibit antitumor, anti-inflammatory and antibacterial activities. Catalyzes the conversion of (2E,6E,10E)-geranylgeranyl diphosphate (GGPP) to ent-copalyl diphosphate (ent-CPP). The protein is Ent-copalyl diphosphate synthase 5 of Isodon rubescens (Rabdosia rubescens).